The following is a 503-amino-acid chain: Probable cytosol aminopeptidase (503 aa).

Residues Lys-270 and Asp-275 each coordinate Mn(2+). Residue Lys-282 is part of the active site. Residues Asp-293, Asp-352, and Glu-354 each coordinate Mn(2+). Residue Arg-356 is part of the active site.

This sequence belongs to the peptidase M17 family. Mn(2+) serves as cofactor.

Its subcellular location is the cytoplasm. It catalyses the reaction Release of an N-terminal amino acid, Xaa-|-Yaa-, in which Xaa is preferably Leu, but may be other amino acids including Pro although not Arg or Lys, and Yaa may be Pro. Amino acid amides and methyl esters are also readily hydrolyzed, but rates on arylamides are exceedingly low.. It carries out the reaction Release of an N-terminal amino acid, preferentially leucine, but not glutamic or aspartic acids.. Its function is as follows. Presumably involved in the processing and regular turnover of intracellular proteins. Catalyzes the removal of unsubstituted N-terminal amino acids from various peptides. The protein is Probable cytosol aminopeptidase of Salmonella typhi.